The following is a 2542-amino-acid chain: Talin-2 (2542 aa).

An FERM domain is found at 88–406 (RPQKIRMLDG…GYIDIILKKK (319 aa)). The interaction with PIP5K1C stretch occupies residues 312 to 406 (GVSFFLVKEK…GYIDIILKKK (95 aa)). Phosphoserine is present on residues Ser428, Ser449, Ser623, and Ser1023. Tyr1665 carries the post-translational modification Phosphotyrosine. Thr1843 is modified (phosphothreonine). In terms of domain architecture, I/LWEQ spans 2294–2533 (TEWVDPEDPT…QIRQQQYKFL (240 aa)).

Interacts directly with PIP5K1C.

It is found in the cytoplasm. The protein localises to the cell junction. It localises to the focal adhesion. The protein resides in the synapse. Its subcellular location is the cell membrane. It is found in the cytoskeleton. As a major component of focal adhesion plaques that links integrin to the actin cytoskeleton, may play an important role in cell adhesion. Recruits PIP5K1C to focal adhesion plaques and strongly activates its kinase activity. The polypeptide is Talin-2 (TLN2) (Homo sapiens (Human)).